Consider the following 1392-residue polypeptide: DNA-directed RNA polymerase subunit beta'' (1392 aa).

Zn(2+)-binding residues include Cys-224, Cys-295, Cys-302, and Cys-305.

Belongs to the RNA polymerase beta' chain family. RpoC2 subfamily. In plastids the minimal PEP RNA polymerase catalytic core is composed of four subunits: alpha, beta, beta', and beta''. When a (nuclear-encoded) sigma factor is associated with the core the holoenzyme is formed, which can initiate transcription. Zn(2+) serves as cofactor.

The protein localises to the plastid. It localises to the chloroplast. It catalyses the reaction RNA(n) + a ribonucleoside 5'-triphosphate = RNA(n+1) + diphosphate. In terms of biological role, DNA-dependent RNA polymerase catalyzes the transcription of DNA into RNA using the four ribonucleoside triphosphates as substrates. This Nicotiana tomentosiformis (Tobacco) protein is DNA-directed RNA polymerase subunit beta''.